The primary structure comprises 444 residues: Magnesium transporter MRS2-F (444 aa).

The disordered stretch occupies residues 128–155; sequence FTDMEGESSAVTSPFPALTSTTPNELEM. Positions 145-155 are enriched in polar residues; it reads LTSTTPNELEM. The stretch at 195–258 forms a coiled coil; that stretch reads VCLESACRSL…QKVRDELEHL (64 aa). Residues 370-390 form a helical membrane-spanning segment; the sequence is GVMLSTATVVITAGVAVVGLF. The Required for magnesium transport activity motif lies at 391-393; that stretch reads GMN. The helical transmembrane segment at 415 to 435 threads the bilayer; the sequence is FWETTLGTIAGCTVMYIVAMG.

This sequence belongs to the CorA metal ion transporter (MIT) (TC 1.A.35.5) family.

It localises to the membrane. Magnesium transporter that may mediate the influx of magnesium. The polypeptide is Magnesium transporter MRS2-F (MRS2-F) (Oryza sativa subsp. indica (Rice)).